A 549-amino-acid chain; its full sequence is OBERON-like protein (549 aa).

Residues 1–56 form a disordered region; sequence MLPPRQQPRPGGLQTSLSLVSPDACGSPNPQERGSTSDQARDSPSESASSRETWPT. Polar residues-rich tracts occupy residues 28–38 and 45–56; these read PNPQERGSTSD and SESASSRETWPT. A PHD-type zinc finger spans residues 224–288; it reads LCMCVICYKF…LFRCHACSRT (65 aa). The stretch at 394 to 520 forms a coiled coil; that stretch reads VQEAIRKMEA…YLFEKIKLQE (127 aa). Residues 519–549 are disordered; the sequence is QESSRASQSSAGGNDPSQMMYSKIQDLIKNM. The span at 521–538 shows a compositional bias: polar residues; sequence SSRASQSSAGGNDPSQMM.

In terms of assembly, self-interacts and probably forms heteromers. Binds to VPg of pea seed borne mosaic virus (PSbMV), turnip mosaic virus (TuMV) and lettuce mosaic virus (LMV), but not with VPg of tobacco etch virus (TEV), cowpea mosaic virus (CPMV), tomato black ring virus (TBRV) and grapevine fan leaf virus (GFLV).

The protein resides in the nucleus. In terms of biological role, required for the maintenance and/or establishment of both the shoot and root meristems, probably by controlling the expression of the meristem genes and of genes required for auxin responses. Involved in the development of the basal pole and in auxin-mediated root and vascular development in the embryo. Confers sensitivity to turnip mosaic virus (TuMV) probably by promoting viral movement and multiplication via interaction with TuMV VPg. The sequence is that of OBERON-like protein (PVIP) from Nicotiana benthamiana.